Reading from the N-terminus, the 596-residue chain is Putative terpene synthase 3, chloroplastic (596 aa).

A chloroplast-targeting transit peptide spans 1–46 (MATLSMQVSTLSKQVKNLNTFGMGSASKLPMVARRVSTIRLRPICS). Residues Asp349 and Asp353 each contribute to the Mn(2+) site. The DDXXD motif motif lies at 349–353 (DDVYD). 2 homodimerization regions span residues 355–361 (YGTLDEL) and 427–464 (EAKW…FTLP). Residues Asp493 and Glu501 each coordinate Mn(2+).

It belongs to the terpene synthase family. As to quaternary structure, homodimer. Mn(2+) is required as a cofactor. The cofactor is Mg(2+).

Its subcellular location is the plastid. It localises to the chloroplast. Its pathway is secondary metabolite biosynthesis; terpenoid biosynthesis. In terms of biological role, putative monoterpene synthase. The polypeptide is Putative terpene synthase 3, chloroplastic (Thymus vulgaris (Thyme)).